The following is a 313-amino-acid chain: Thymidylate synthase (313 aa).

The interval 1–28 (MPVAGSELPRRPLPPAAQERDAEPRPPH) is disordered. Residues 18 to 28 (QERDAEPRPPH) show a composition bias toward basic and acidic residues. Arginine 50 contacts dUMP. Phosphoserine is present on serine 114. Residues 175-176 (RR), 195-196 (CH), 215-218 (RSGD), asparagine 226, and 256-258 (HIY) each bind dUMP. The active-site Nucleophile is cysteine 195. Residue aspartate 218 coordinates (6R)-5,10-methylene-5,6,7,8-tetrahydrofolate. Glycyl lysine isopeptide (Lys-Gly) (interchain with G-Cter in SUMO2) cross-links involve residues lysine 287, lysine 292, and lysine 308. Alanine 312 contacts (6R)-5,10-methylene-5,6,7,8-tetrahydrofolate.

Belongs to the thymidylate synthase family. Homodimer.

The protein localises to the nucleus. Its subcellular location is the cytoplasm. It is found in the mitochondrion. It localises to the mitochondrion matrix. The protein resides in the mitochondrion inner membrane. The enzyme catalyses dUMP + (6R)-5,10-methylene-5,6,7,8-tetrahydrofolate = 7,8-dihydrofolate + dTMP. It functions in the pathway pyrimidine metabolism; dTTP biosynthesis. Its function is as follows. Catalyzes the reductive methylation of 2'-deoxyuridine 5'-monophosphate (dUMP) to thymidine 5'-monophosphate (dTMP), using the cosubstrate, 5,10- methylenetetrahydrofolate (CH2H4folate) as a 1-carbon donor and reductant and contributes to the de novo mitochondrial thymidylate biosynthesis pathway. This is Thymidylate synthase from Homo sapiens (Human).